Consider the following 328-residue polypeptide: GTP 3',8-cyclase (328 aa).

The Radical SAM core domain occupies 1 to 229 (MNQVDYLRIS…DAQVRGAGPA (229 aa)). A GTP-binding site is contributed by arginine 8. 2 residues coordinate [4Fe-4S] cluster: cysteine 15 and cysteine 19. Tyrosine 21 contacts S-adenosyl-L-methionine. A [4Fe-4S] cluster-binding site is contributed by cysteine 22. Arginine 60 lines the GTP pocket. Glycine 64 serves as a coordination point for S-adenosyl-L-methionine. Threonine 91 serves as a coordination point for GTP. Serine 115 is a binding site for S-adenosyl-L-methionine. Lysine 155 contributes to the GTP binding site. Methionine 189 lines the S-adenosyl-L-methionine pocket. Cysteine 252 and cysteine 255 together coordinate [4Fe-4S] cluster. 257–259 (RMR) contacts GTP. A [4Fe-4S] cluster-binding site is contributed by cysteine 269.

Belongs to the radical SAM superfamily. MoaA family. In terms of assembly, monomer and homodimer. [4Fe-4S] cluster is required as a cofactor.

It catalyses the reaction GTP + AH2 + S-adenosyl-L-methionine = (8S)-3',8-cyclo-7,8-dihydroguanosine 5'-triphosphate + 5'-deoxyadenosine + L-methionine + A + H(+). It functions in the pathway cofactor biosynthesis; molybdopterin biosynthesis. Functionally, catalyzes the cyclization of GTP to (8S)-3',8-cyclo-7,8-dihydroguanosine 5'-triphosphate. The sequence is that of GTP 3',8-cyclase from Nostoc sp. (strain PCC 7120 / SAG 25.82 / UTEX 2576).